The chain runs to 640 residues: 5-aminolevulinate synthase, non-specific, mitochondrial (640 aa).

A mitochondrion-targeting transit peptide spans 1-56 (METVVRSCPFLSRVPQAFLQKAGKSLLFYAQNCPKMMEVGAKPAPRALSTAAVHYQ). Disordered stretches follow at residues 60-103 (ETPP…TSQG) and 143-163 (EVAE…GGDP). Over residues 75 to 92 (VQQTPDGSQQSPDGTQLP) the composition is skewed to polar residues. Residues R217, S334, and K353 each contribute to the substrate site. Pyridoxal 5'-phosphate-binding residues include S386, H414, and T442. K445 is an active-site residue. K445 is subject to N6-(pyridoxal phosphate)lysine. Pyridoxal 5'-phosphate contacts are provided by T474 and T475. Position 562 (T562) interacts with substrate. At P576 the chain carries Hydroxyproline.

It belongs to the class-II pyridoxal-phosphate-dependent aminotransferase family. In terms of assembly, homodimer. Interacts (hydroxylated form) with VHL. It depends on pyridoxal 5'-phosphate as a cofactor. Post-translationally, in normoxia, is hydroxylated at Pro-576, promoting interaction with VHL, initiating ubiquitination and subsequent degradation via the proteasome. Ubiquitinated; in normoxia following hydroxylation and interaction with VHL, leading to its subsequent degradation via the proteasome.

Its subcellular location is the mitochondrion inner membrane. The catalysed reaction is succinyl-CoA + glycine + H(+) = 5-aminolevulinate + CO2 + CoA. The protein operates within porphyrin-containing compound metabolism; protoporphyrin-IX biosynthesis; 5-aminolevulinate from glycine: step 1/1. Functionally, catalyzes the pyridoxal 5'-phosphate (PLP)-dependent condensation of succinyl-CoA and glycine to form aminolevulinic acid (ALA), with CoA and CO2 as by-products. This Pongo abelii (Sumatran orangutan) protein is 5-aminolevulinate synthase, non-specific, mitochondrial (ALAS1).